The following is a 118-amino-acid chain: uncharacterized protein (118 aa).

The HTH hxlR-type domain maps to 6-104; that stretch reads CGFEVTKEVI…WGGYYAEQEY (99 aa).

This is an uncharacterized protein from Bacillus subtilis (strain 168).